The primary structure comprises 645 residues: Cytoplasmic dynein 1 intermediate chain 1 (645 aa).

Composition is skewed to basic and acidic residues over residues 1–13 (MSDKSDLKAELER) and 20–58 (QIREEKKRKEEERKKKEADMQQKKEPVQDDSDLDRKRRE). Disordered regions lie at residues 1-58 (MSDK…KRRE) and 96-125 (MSPSSKSVSTPSEAGSQDSGDLGPLTRTLQ). S2 carries the N-acetylserine modification. Positions 2 to 123 (SDKSDLKAEL…SGDLGPLTRT (122 aa)) are interaction with DCTN1. S50 and S100 each carry phosphoserine. A compositionally biased stretch (low complexity) spans 96 to 107 (MSPSSKSVSTPS). Phosphothreonine is present on T105. 3 positions are modified to phosphoserine: S107, S111, and S114. An interaction with DYNLT1 region spans residues 147–163 (KLGVSKVTQVDFLPREV). Residues 169-221 (ETQTPLATHQSEEDEEDEEMVESKVGQDSELENQDKKQEVKEAPPRELTEEEK) are disordered. T176 carries the phosphothreonine modification. A phosphoserine mark is found at S179 and S197. The span at 189–221 (VESKVGQDSELENQDKKQEVKEAPPRELTEEEK) shows a compositional bias: basic and acidic residues. WD repeat units lie at residues 285–334 (SKHR…TTPE), 338–378 (HCQS…RTPV), 387–428 (AHTH…TPQE), 437–477 (SKPV…AGIG), 482–527 (GHQG…PLYS), 530–570 (DNAD…EVPT), and 576–615 (EGASALNRVRWAQAGKEVAVGDSEGRIWVYDVGELAVPHN). Phosphoserine is present on S635.

This sequence belongs to the dynein intermediate chain family. In terms of assembly, homodimer. The cytoplasmic dynein 1 complex consists of two catalytic heavy chains (HCs) and a number of non-catalytic subunits presented by intermediate chains (ICs), light intermediate chains (LICs) and light chains (LCs); the composition seems to vary in respect to the IC, LIC and LC composition. The heavy chain homodimer serves as a scaffold for the probable homodimeric assembly of the respective non-catalytic subunits. The ICs and LICs bind directly to the HC dimer and the LCs assemble on the IC dimer. Interacts with DYNC1H1. Interacts with DYNLT1 and DYNLT3. Interacts with DCTN1. Interacts with MCRS1; the interaction is required for the proper distribution of centriolar satellites.

It localises to the cytoplasm. It is found in the chromosome. The protein resides in the centromere. The protein localises to the kinetochore. Its subcellular location is the cytoskeleton. It localises to the spindle pole. Functionally, acts as one of several non-catalytic accessory components of the cytoplasmic dynein 1 complex that are thought to be involved in linking dynein to cargos and to adapter proteins that regulate dynein function. Cytoplasmic dynein 1 acts as a motor for the intracellular retrograde motility of vesicles and organelles along microtubules. The intermediate chains mediate the binding of dynein to dynactin via its 150 kDa component (p150-glued) DCTN1. May play a role in mediating the interaction of cytoplasmic dynein with membranous organelles and kinetochores. This chain is Cytoplasmic dynein 1 intermediate chain 1 (DYNC1I1), found in Homo sapiens (Human).